The following is a 453-amino-acid chain: Exopolyphosphatase PRUNE1 (453 aa).

Position 1 is an N-acetylmethionine (Met1). Residues Asp28, Asp30, Asp106, and Asp179 each contribute to the Mn(2+) site. Positions 106–108 (DHH) match the DHH motif motif. The essential for homodimerization stretch occupies residues 393–420 (SLISGLSQDEEDPPLPPTPMNSLVDECP). Positions 395–421 (ISGLSQDEEDPPLPPTPMNSLVDECPL) are disordered. Ser399 carries the phosphoserine modification. At Thr410 the chain carries Phosphothreonine. Ser414 bears the Phosphoserine mark.

Belongs to the PPase class C family. Prune subfamily. In terms of assembly, homooligomer. Able to homodimerize via its C-terminal domain. Interacts with NME1. Interacts with GSK3; at focal adhesion complexes where paxillin and vinculin are colocalized. Interacts with alpha and beta tubulin. It depends on Mn(2+) as a cofactor. In terms of tissue distribution, ubiquitously expressed. Seems to be overexpressed in aggressive sarcoma subtypes, such as leiomyosarcomas and malignant fibrous histiocytomas (MFH) as well as in the less malignant liposarcomas.

Its subcellular location is the cytoplasm. It is found in the nucleus. The protein localises to the cell junction. The protein resides in the focal adhesion. It carries out the reaction diphosphate + H2O = 2 phosphate + H(+). With respect to regulation, activated by magnesium ions and inhibited by manganese ions. Inhibited by dipyridamole, moderately sensitive to IBMX and inhibited by vinpocetine. In terms of biological role, phosphodiesterase (PDE) that has higher activity toward cAMP than cGMP, as substrate. Plays a role in cell proliferation, migration and differentiation, and acts as a negative regulator of NME1. Plays a role in the regulation of neurogenesis. Involved in the regulation of microtubule polymerization. This is Exopolyphosphatase PRUNE1 from Homo sapiens (Human).